The primary structure comprises 365 residues: Putative F-box/kelch-repeat protein At3g16880 (365 aa).

The region spanning 1–47 (MTKMSKLPNDLLEEILSRSPLYSMRAIRLTCKKWNTLAKEESFTKKQ) is the F-box domain. Kelch repeat units follow at residues 98-149 (RVYH…TKKS) and 155-205 (ILSS…VKGN).

The chain is Putative F-box/kelch-repeat protein At3g16880 from Arabidopsis thaliana (Mouse-ear cress).